The primary structure comprises 133 residues: MIKKVVAYAAIAASVMGASAAAAPQAMAIGDDSGPVSANGNGASQYFGNSMTTGNMSPQMALIQGSFNKPCIAVSDIPVSVIGLVPIQDLNVLGDDMNQQCAENSTQAKRDGALAHLLEDVSILSSNGEGGKG.

The N-terminal stretch at 1-28 is a signal peptide; that stretch reads MIKKVVAYAAIAASVMGASAAAAPQAMA. Amyloid-forming regions lie at residues 45 to 57 and 59 to 70; these read QYFG…GNMS and QMALIQGSFNKP. Residues 45–70 are required for amyloid formation; sequence QYFGNSMTTGNMSPQMALIQGSFNKP.

The protein belongs to the rodlin family.

The protein resides in the secreted. Its subcellular location is the cell wall. The protein localises to the spore wall. In terms of biological role, forms part of the rodlet layer on the spore surface; despite their high similarity both RdlA and RdlB are required for rodlet formation. Plays a role in cell adhesion to polystyrene plates. Forms amyloid-like fibrils in vitro composed of stacked beta-sheets. In Streptomyces coelicolor (strain ATCC BAA-471 / A3(2) / M145), this protein is Rodlin protein RdlB.